The chain runs to 363 residues: tRNA(Met) cytidine acetate ligase (363 aa).

Residues 7-20 (IAEFNPFHNGHKYL), Gly96, Asn152, and Arg175 contribute to the ATP site.

The protein belongs to the TmcAL family.

The protein localises to the cytoplasm. It carries out the reaction cytidine(34) in elongator tRNA(Met) + acetate + ATP = N(4)-acetylcytidine(34) in elongator tRNA(Met) + AMP + diphosphate. Catalyzes the formation of N(4)-acetylcytidine (ac(4)C) at the wobble position of elongator tRNA(Met), using acetate and ATP as substrates. First activates an acetate ion to form acetyladenylate (Ac-AMP) and then transfers the acetyl group to tRNA to form ac(4)C34. The polypeptide is tRNA(Met) cytidine acetate ligase (Streptococcus thermophilus (strain ATCC BAA-491 / LMD-9)).